Here is a 702-residue protein sequence, read N- to C-terminus: NAD(P)H-quinone oxidoreductase subunit 5, chloroplastic (702 aa).

Helical transmembrane passes span Trp-1–Ile-21, Ile-31–Ser-51, Ile-81–Ile-101, Phe-117–Ile-137, Ile-139–Thr-159, Gly-177–Phe-197, Asn-211–Ala-231, Thr-250–Ala-270, Leu-272–Ile-292, Leu-319–Ile-339, Ala-346–Ser-366, Thr-388–Ser-408, Trp-417–Tyr-437, Leu-534–Phe-554, and Ser-602–Phe-622.

The protein belongs to the complex I subunit 5 family. As to quaternary structure, NDH is composed of at least 16 different subunits, 5 of which are encoded in the nucleus.

It localises to the plastid. It is found in the chloroplast thylakoid membrane. It catalyses the reaction a plastoquinone + NADH + (n+1) H(+)(in) = a plastoquinol + NAD(+) + n H(+)(out). It carries out the reaction a plastoquinone + NADPH + (n+1) H(+)(in) = a plastoquinol + NADP(+) + n H(+)(out). Its function is as follows. NDH shuttles electrons from NAD(P)H:plastoquinone, via FMN and iron-sulfur (Fe-S) centers, to quinones in the photosynthetic chain and possibly in a chloroplast respiratory chain. The immediate electron acceptor for the enzyme in this species is believed to be plastoquinone. Couples the redox reaction to proton translocation, and thus conserves the redox energy in a proton gradient. This is NAD(P)H-quinone oxidoreductase subunit 5, chloroplastic (ndhF) from Poa pratensis (Kentucky bluegrass).